An 80-amino-acid polypeptide reads, in one-letter code: Acyl carrier protein (80 aa).

The Carrier domain occupies 4–79; sequence EEIFNKIKDL…DAVSYIKSHQ (76 aa). An O-(pantetheine 4'-phosphoryl)serine modification is found at S39.

Belongs to the acyl carrier protein (ACP) family. Post-translationally, 4'-phosphopantetheine is transferred from CoA to a specific serine of apo-ACP by AcpS. This modification is essential for activity because fatty acids are bound in thioester linkage to the sulfhydryl of the prosthetic group.

The protein resides in the cytoplasm. It functions in the pathway lipid metabolism; fatty acid biosynthesis. Carrier of the growing fatty acid chain in fatty acid biosynthesis. The protein is Acyl carrier protein of Lactobacillus acidophilus (strain ATCC 700396 / NCK56 / N2 / NCFM).